We begin with the raw amino-acid sequence, 179 residues long: ATP-dependent protease subunit HslV (179 aa).

Residue T9 is part of the active site. The Na(+) site is built by A164, C167, and T170.

Belongs to the peptidase T1B family. HslV subfamily. As to quaternary structure, a double ring-shaped homohexamer of HslV is capped on each side by a ring-shaped HslU homohexamer. The assembly of the HslU/HslV complex is dependent on binding of ATP.

It localises to the cytoplasm. It catalyses the reaction ATP-dependent cleavage of peptide bonds with broad specificity.. Allosterically activated by HslU binding. In terms of biological role, protease subunit of a proteasome-like degradation complex believed to be a general protein degrading machinery. The chain is ATP-dependent protease subunit HslV from Syntrophobacter fumaroxidans (strain DSM 10017 / MPOB).